Here is a 338-residue protein sequence, read N- to C-terminus: Lipoate-protein ligase A (338 aa).

In terms of domain architecture, BPL/LPL catalytic spans 29–216 (PATQRVLFLW…AFFAHYGERV (188 aa)). ATP contacts are provided by residues Arg71, 76–79 (GAVF), and Lys134. Position 134 (Lys134) interacts with (R)-lipoate.

Belongs to the LplA family. Monomer.

It is found in the cytoplasm. The catalysed reaction is L-lysyl-[lipoyl-carrier protein] + (R)-lipoate + ATP = N(6)-[(R)-lipoyl]-L-lysyl-[lipoyl-carrier protein] + AMP + diphosphate + H(+). Its pathway is protein modification; protein lipoylation via exogenous pathway; protein N(6)-(lipoyl)lysine from lipoate: step 1/2. It participates in protein modification; protein lipoylation via exogenous pathway; protein N(6)-(lipoyl)lysine from lipoate: step 2/2. In terms of biological role, catalyzes both the ATP-dependent activation of exogenously supplied lipoate to lipoyl-AMP and the transfer of the activated lipoyl onto the lipoyl domains of lipoate-dependent enzymes. The protein is Lipoate-protein ligase A of Salmonella dublin (strain CT_02021853).